We begin with the raw amino-acid sequence, 107 residues long: MASIIYSPKDIFEQEFKTSMSGFNKKEVDEFLDNVIQDYETYISEIEELKAEIERLKNQNTHPKSPSTENRHAMVQPTRVAQSATNFDILKRISRLEKEVFGKQITE.

Residues 32 to 65 (LDNVIQDYETYISEIEELKAEIERLKNQNTHPKS) are a coiled coil. Residues 57 to 80 (KNQNTHPKSPSTENRHAMVQPTRV) are disordered. Residues 58-68 (NQNTHPKSPST) show a composition bias toward polar residues.

Belongs to the GpsB family. In terms of assembly, forms polymers through the coiled coil domains. Interacts with PBP1, MreC and EzrA.

Its subcellular location is the cytoplasm. Divisome component that associates with the complex late in its assembly, after the Z-ring is formed, and is dependent on DivIC and PBP2B for its recruitment to the divisome. Together with EzrA, is a key component of the system that regulates PBP1 localization during cell cycle progression. Its main role could be the removal of PBP1 from the cell pole after pole maturation is completed. Also contributes to the recruitment of PBP1 to the division complex. Not essential for septum formation. In Streptococcus uberis (strain ATCC BAA-854 / 0140J), this protein is Cell cycle protein GpsB.